A 375-amino-acid polypeptide reads, in one-letter code: Isopentenyl-diphosphate delta-isomerase (375 aa).

Residue 8–9 (RK) coordinates substrate. FMN-binding positions include threonine 65, 66-68 (GMT), serine 96, and asparagine 125. 96–98 (SQR) provides a ligand contact to substrate. Residue glutamine 160 coordinates substrate. Glutamate 161 lines the Mg(2+) pocket. FMN is bound by residues lysine 192, threonine 222, 273–275 (GVR), and 294–295 (AL).

Belongs to the IPP isomerase type 2 family. Homooctamer. Dimer of tetramers. FMN serves as cofactor. It depends on NADPH as a cofactor. Mg(2+) is required as a cofactor.

Its subcellular location is the cytoplasm. It carries out the reaction isopentenyl diphosphate = dimethylallyl diphosphate. Involved in the biosynthesis of isoprenoids. Catalyzes the 1,3-allylic rearrangement of the homoallylic substrate isopentenyl (IPP) to its allylic isomer, dimethylallyl diphosphate (DMAPP). The chain is Isopentenyl-diphosphate delta-isomerase from Aeropyrum pernix (strain ATCC 700893 / DSM 11879 / JCM 9820 / NBRC 100138 / K1).